The primary structure comprises 624 residues: Methyl-accepting chemotaxis protein McpG (624 aa).

A helical transmembrane segment spans residues 11–31; that stretch reads ILLAASLIVILAFSLFTLYND. Positions 36–254 constitute a Cache domain; the sequence is NAIREDLENY…GLPSANWYIG (219 aa). The helical transmembrane segment at 272-292 threads the bilayer; sequence SAVIATVVAVVIIIGLLGLLI. Residues 293–347 form the HAMP domain; it reads RVLMQPLHTMTRAMEDIAEGEGDLTKRLHIHSHDEFGVLGNAFNRFVERIHSSIR. The Methyl-accepting transducer domain maps to 352–588; the sequence is ATEQVNEVAL…AINMDINEIN (237 aa).

This sequence belongs to the methyl-accepting chemotaxis (MCP) protein family.

The protein resides in the cell membrane. Functionally, chemotactic-signal transducers respond to changes in the concentration of attractants and repellents in the environment, transduce a signal from the outside to the inside of the cell, and facilitate sensory adaptation through the variation of the level of methylation. McpG is a specific gamma-aminobutyric acid (GABA) chemoreceptor that recognizes GABA over a wide range of environmental conditions. Contributes to attraction to and colonization of plant roots. The sequence is that of Methyl-accepting chemotaxis protein McpG from Pseudomonas putida (strain ATCC 47054 / DSM 6125 / CFBP 8728 / NCIMB 11950 / KT2440).